The sequence spans 320 residues: Cytosolic Fe-S cluster assembly factor NUBP1 (320 aa).

Methionine 1 bears the N-acetylmethionine mark. Positions 8, 22, 25, and 31 each coordinate [4Fe-4S] cluster. Glycine 62–serine 69 serves as a coordination point for ATP. Residues cysteine 235 and cysteine 238 each contribute to the [4Fe-4S] cluster site. The residue at position 319 (serine 319) is a Phosphoserine.

Belongs to the Mrp/NBP35 ATP-binding proteins family. NUBP1/NBP35 subfamily. In terms of assembly, heterotetramer of 2 NUBP1 and 2 NUBP2 chains. Interacts with KIFC1. Interacts with NUBP2. Interacts with the BBS/CCT complex subunit CCT1. The cofactor is [4Fe-4S] cluster.

The protein resides in the cytoplasm. Its subcellular location is the nucleus. It localises to the cell projection. The protein localises to the cytoskeleton. It is found in the cilium axoneme. The protein resides in the cilium basal body. Its subcellular location is the microtubule organizing center. It localises to the centrosome. The protein localises to the centriole. Component of the cytosolic iron-sulfur (Fe/S) protein assembly (CIA) machinery. Required for maturation of extramitochondrial Fe-S proteins. The NUBP1-NUBP2 heterotetramer forms a Fe-S scaffold complex, mediating the de novo assembly of an Fe-S cluster and its transfer to target apoproteins. Implicated in the regulation of centrosome duplication. Negatively regulates cilium formation and structure. In Homo sapiens (Human), this protein is Cytosolic Fe-S cluster assembly factor NUBP1.